The following is a 317-amino-acid chain: Beta-ketoacyl-[acyl-carrier-protein] synthase III (317 aa).

Residues Cys112 and His244 contribute to the active site. The segment at Gln245–Arg249 is ACP-binding. Asn274 is a catalytic residue.

It belongs to the thiolase-like superfamily. FabH family. In terms of assembly, homodimer.

The protein resides in the cytoplasm. It catalyses the reaction malonyl-[ACP] + acetyl-CoA + H(+) = 3-oxobutanoyl-[ACP] + CO2 + CoA. Its pathway is lipid metabolism; fatty acid biosynthesis. In terms of biological role, catalyzes the condensation reaction of fatty acid synthesis by the addition to an acyl acceptor of two carbons from malonyl-ACP. Catalyzes the first condensation reaction which initiates fatty acid synthesis and may therefore play a role in governing the total rate of fatty acid production. Possesses both acetoacetyl-ACP synthase and acetyl transacylase activities. Its substrate specificity determines the biosynthesis of branched-chain and/or straight-chain of fatty acids. The sequence is that of Beta-ketoacyl-[acyl-carrier-protein] synthase III from Rickettsia canadensis (strain McKiel).